A 194-amino-acid polypeptide reads, in one-letter code: Small ribosomal subunit protein eS7 (194 aa).

It belongs to the eukaryotic ribosomal protein eS7 family.

The polypeptide is Small ribosomal subunit protein eS7 (rps-7) (Caenorhabditis elegans).